Consider the following 333-residue polypeptide: MKLLKREGLSLTEEKALWMYQKMLEIRGFEDKVHELFAQGVLPGFVHLYAGEEAVAVGVCAHLHDGDSITSTHRGHGHCIAKGCDLDGMMAEIFGKATGLCKGKGGSMHIADLDKGMLGANGIVGGGFTLACGSALTAKYKQTKNVSVCFFGDGANNQGTFHEGLNLAAVWNLPVVFVAENNGYGEATPFEYASACDSIADRAAAYNMPGVTVDGKDILAVYQAAEEAIERARNGGGPSLIECMTYRNYGHFEGDAQTYKTKDERVEHLEEKDAIQGFKNYLLKETDANKLSDIEQRVSESIEKAVSFSEDSPYPKDSELLTDVYVSYEKGGM.

In terms of assembly, tetramer of 2 alpha and 2 beta subunits. The cofactor is thiamine diphosphate.

Its pathway is ketone degradation; acetoin degradation. Its function is as follows. Catalyzes the 2,6-dichlorophenolindophenol-dependent cleavage of acetoin into acetate and acetaldehyde. The alpha subunit is probably the catalytic subunit of the enzyme. In Bacillus subtilis (strain 168), this protein is Acetoin:2,6-dichlorophenolindophenol oxidoreductase subunit alpha (acoA).